Here is an 80-residue protein sequence, read N- to C-terminus: Metallothionein-like protein type 2, MT2-22 (80 aa).

The protein belongs to the metallothionein superfamily. Type 15 family.

Its function is as follows. Metallothioneins have a high content of cysteine residues that bind various heavy metals. The protein is Metallothionein-like protein type 2, MT2-22 of Brassica juncea (Indian mustard).